We begin with the raw amino-acid sequence, 90 residues long: Probable Fe(2+)-trafficking protein (90 aa).

It belongs to the Fe(2+)-trafficking protein family.

Could be a mediator in iron transactions between iron acquisition and iron-requiring processes, such as synthesis and/or repair of Fe-S clusters in biosynthetic enzymes. The polypeptide is Probable Fe(2+)-trafficking protein (Acidovorax ebreus (strain TPSY) (Diaphorobacter sp. (strain TPSY))).